A 319-amino-acid chain; its full sequence is Ribose-phosphate pyrophosphokinase (319 aa).

Residues 40–42 and 99–100 each bind ATP; these read DGE and RQ. The Mg(2+) site is built by His-134 and Asp-174. Lys-198 is a catalytic residue. D-ribose 5-phosphate contacts are provided by residues Arg-200, Asp-224, and 228-232; that span reads DTAGT.

It belongs to the ribose-phosphate pyrophosphokinase family. Class I subfamily. Homohexamer. Mg(2+) is required as a cofactor.

It localises to the cytoplasm. The enzyme catalyses D-ribose 5-phosphate + ATP = 5-phospho-alpha-D-ribose 1-diphosphate + AMP + H(+). It functions in the pathway metabolic intermediate biosynthesis; 5-phospho-alpha-D-ribose 1-diphosphate biosynthesis; 5-phospho-alpha-D-ribose 1-diphosphate from D-ribose 5-phosphate (route I): step 1/1. Functionally, involved in the biosynthesis of the central metabolite phospho-alpha-D-ribosyl-1-pyrophosphate (PRPP) via the transfer of pyrophosphoryl group from ATP to 1-hydroxyl of ribose-5-phosphate (Rib-5-P). This is Ribose-phosphate pyrophosphokinase from Coxiella burnetii (strain RSA 493 / Nine Mile phase I).